The following is a 303-amino-acid chain: Olfactory receptor 10A2 (303 aa).

The Extracellular portion of the chain corresponds to 1–12; the sequence is MSFSSLPTEIQS. The helical transmembrane segment at 13 to 33 threads the bilayer; it reads LLFLTFLTIYLVTLMGNCLII. Residues 34–41 are Cytoplasmic-facing; the sequence is LVTLADPM. The helical transmembrane segment at 42–62 threads the bilayer; sequence LHSPMYFFLRNLSFLEIGFNL. The Extracellular segment spans residues 63–86; it reads VIVPKMLGTLLAQDTTISFLGCAT. Cysteine 84 and cysteine 176 are joined by a disulfide. Residues 87–107 traverse the membrane as a helical segment; that stretch reads QMYFFFFFGVAECFLLATMAY. The Cytoplasmic portion of the chain corresponds to 108 to 126; that stretch reads DRYVAICSPLHYPVIMNQR. The helical transmembrane segment at 127 to 147 threads the bilayer; sequence TRAKLAAASWFPGFPVATVQT. At 148-184 the chain is on the extracellular side; sequence TWLFSFPFCGTNKVNHFFCDSPPVLRLVCADTALFEI. Residues 185–204 traverse the membrane as a helical segment; the sequence is YAIVGTILVVMIPCLLILCS. Residues 205-224 are Cytoplasmic-facing; sequence YTHIAAAILKIPSAKGKNKA. The chain crosses the membrane as a helical span at residues 225–245; it reads FSTCSSHLLVVSLFYISLSLT. Topologically, residues 246–258 are extracellular; sequence YFRPKSNNSPEGK. The chain crosses the membrane as a helical span at residues 259-279; the sequence is KLLSLSYTVMTPMLNPIIYSL. The Cytoplasmic portion of the chain corresponds to 280-301; that stretch reads RNNEVKNALSRTVSKALALRNC.

It belongs to the G-protein coupled receptor 1 family.

Its subcellular location is the cell membrane. In terms of biological role, odorant receptor. The polypeptide is Olfactory receptor 10A2 (OR10A2) (Homo sapiens (Human)).